Consider the following 96-residue polypeptide: RNA-binding protein Hfq (96 aa).

The 60-residue stretch at 9-68 folds into the Sm domain; it reads DPFLNALRRERVPVSIYLVNGIKLQGQIESFDQFVILLKNTVSQMVYKHAISTVVPSRPV. The tract at residues 64–96 is disordered; the sequence is PSRPVSHHSNTGTNQAGTNYSGGNATQQDDVAE. The span at 70-96 shows a compositional bias: polar residues; it reads HHSNTGTNQAGTNYSGGNATQQDDVAE.

This sequence belongs to the Hfq family. Homohexamer.

Functionally, RNA chaperone that binds small regulatory RNA (sRNAs) and mRNAs to facilitate mRNA translational regulation in response to envelope stress, environmental stress and changes in metabolite concentrations. Also binds with high specificity to tRNAs. The polypeptide is RNA-binding protein Hfq (Proteus mirabilis (strain HI4320)).